The primary structure comprises 484 residues: Probable glycine dehydrogenase (decarboxylating) subunit 2 (484 aa).

K270 carries the post-translational modification N6-(pyridoxal phosphate)lysine.

It belongs to the GcvP family. C-terminal subunit subfamily. As to quaternary structure, the glycine cleavage system is composed of four proteins: P, T, L and H. In this organism, the P 'protein' is a heterodimer of two subunits. Pyridoxal 5'-phosphate serves as cofactor.

The enzyme catalyses N(6)-[(R)-lipoyl]-L-lysyl-[glycine-cleavage complex H protein] + glycine + H(+) = N(6)-[(R)-S(8)-aminomethyldihydrolipoyl]-L-lysyl-[glycine-cleavage complex H protein] + CO2. Its function is as follows. The glycine cleavage system catalyzes the degradation of glycine. The P protein binds the alpha-amino group of glycine through its pyridoxal phosphate cofactor; CO(2) is released and the remaining methylamine moiety is then transferred to the lipoamide cofactor of the H protein. This chain is Probable glycine dehydrogenase (decarboxylating) subunit 2, found in Desulforamulus reducens (strain ATCC BAA-1160 / DSM 100696 / MI-1) (Desulfotomaculum reducens).